The sequence spans 542 residues: Pre-mRNA-splicing factor 38B (542 aa).

Residues 1-12 show a composition bias toward polar residues; that stretch reads MANNSPALTGNS. Positions 1–24 are disordered; the sequence is MANNSPALTGNSQPQHQAAAAVVQ. Alanine 2 is modified (N-acetylalanine). Serine 5 bears the Phosphoserine mark. Low complexity predominate over residues 13–24; sequence QPQHQAAAAVVQ. At lysine 227 the chain carries N6-acetyllysine. Positions 232 to 542 are disordered; the sequence is QIKTRPRKIK…KEHKNKDETV (311 aa). Positions 243 to 255 are enriched in basic and acidic residues; sequence DGKEGVEEIDRHI. The span at 256-284 shows a compositional bias: basic residues; that stretch reads ERRRSRSPRRSLSPRRSPRRSRSRSHHRD. Phosphoserine occurs at positions 288, 290, 318, and 320. A compositionally biased stretch (basic and acidic residues) spans 291-327; sequence FDRELEREKERQRLEREAKEREKERRRSRSLDRGLDR. Residues 292-323 are a coiled coil; it reads DRELEREKERQRLEREAKEREKERRRSRSLDR. The span at 328–344 shows a compositional bias: basic residues; sequence RRSRSRERHRSRSRSRD. Basic and acidic residues predominate over residues 345–418; that stretch reads RKGDRRDRDR…DRRHRDDKKE (74 aa). Positions 419–448 are enriched in basic residues; it reads SKKKHSRSRSRERKHRSRSRSRNAGKRSRS. Phosphoserine is present on serine 446. Basic and acidic residues predominate over residues 449–466; sequence RSKDKASKHKNESKEKSN. Phosphoserine occurs at positions 471, 473, and 479. Composition is skewed to basic and acidic residues over residues 479 to 492 and 499 to 522; these read SVEKRKREHSPSRE and RSQDRSHKRDHDSKDQSDRQDHQR. Residues serine 523, serine 525, and serine 530 each carry the phosphoserine modification. A compositionally biased stretch (basic and acidic residues) spans 530–542; that stretch reads SQEKEHKNKDETV.

The protein belongs to the PRP38 family.

The protein localises to the nucleus. In terms of biological role, may be required for pre-mRNA splicing. This chain is Pre-mRNA-splicing factor 38B (Prpf38b), found in Rattus norvegicus (Rat).